Consider the following 198-residue polypeptide: NAD(P)H dehydrogenase (quinone) (198 aa).

One can recognise a Flavodoxin-like domain in the interval 4 to 189 (VLVLYYSMYG…ALARYQGRHV (186 aa)). Residues 10–15 (SMYGHV) and 78–80 (TRF) each bind FMN. Tyr-12 provides a ligand contact to NAD(+). Trp-98 lines the substrate pocket. FMN contacts are provided by residues 113–118 (STGTGG) and His-133.

Belongs to the WrbA family. The cofactor is FMN.

It carries out the reaction a quinone + NADH + H(+) = a quinol + NAD(+). The enzyme catalyses a quinone + NADPH + H(+) = a quinol + NADP(+). This Halorhodospira halophila (strain DSM 244 / SL1) (Ectothiorhodospira halophila (strain DSM 244 / SL1)) protein is NAD(P)H dehydrogenase (quinone).